A 343-amino-acid chain; its full sequence is Uroporphyrinogen decarboxylase (343 aa).

Substrate-binding positions include 23–27, D73, Y150, S205, and H322; that span reads RQAGR.

This sequence belongs to the uroporphyrinogen decarboxylase family. Homodimer.

The protein resides in the cytoplasm. It carries out the reaction uroporphyrinogen III + 4 H(+) = coproporphyrinogen III + 4 CO2. Its pathway is porphyrin-containing compound metabolism; protoporphyrin-IX biosynthesis; coproporphyrinogen-III from 5-aminolevulinate: step 4/4. Functionally, catalyzes the decarboxylation of four acetate groups of uroporphyrinogen-III to yield coproporphyrinogen-III. This Cereibacter sphaeroides (strain ATCC 17029 / ATH 2.4.9) (Rhodobacter sphaeroides) protein is Uroporphyrinogen decarboxylase.